The chain runs to 416 residues: Adenylosuccinate synthetase (416 aa).

Residues 13-19 (GDEGKGK) and 41-43 (GHT) contribute to the GTP site. Asp14 serves as the catalytic Proton acceptor. Residues Asp14 and Gly41 each coordinate Mg(2+). Residues 14–17 (DEGK), 39–42 (NAGH), Thr126, Arg140, Gln220, Thr235, and Arg299 contribute to the IMP site. The Proton donor role is filled by His42. Residue 295 to 301 (TTTGRKR) participates in substrate binding. GTP contacts are provided by residues Arg301, 327–329 (KLD), and 405–407 (STS).

This sequence belongs to the adenylosuccinate synthetase family. As to quaternary structure, homodimer. Mg(2+) is required as a cofactor.

Its subcellular location is the cytoplasm. The enzyme catalyses IMP + L-aspartate + GTP = N(6)-(1,2-dicarboxyethyl)-AMP + GDP + phosphate + 2 H(+). The protein operates within purine metabolism; AMP biosynthesis via de novo pathway; AMP from IMP: step 1/2. Functionally, plays an important role in the de novo pathway of purine nucleotide biosynthesis. Catalyzes the first committed step in the biosynthesis of AMP from IMP. This is Adenylosuccinate synthetase from Campylobacter fetus subsp. fetus (strain 82-40).